The chain runs to 412 residues: Transcription factor IIIA (412 aa).

A C2H2-type 1; degenerate zinc finger spans residues 20–43 (YLCQYCGISRSKNYLITKHIQSHH). C2H2-type zinc fingers lie at residues 66 to 88 (HTCQECGAEFKKPAHLKQHMQSH), 94 to 118 (FTCYVDDCAASYRRKDHLNRHLLTH), and 123 to 148 (FKCPKENCKSEFSVQGNVGRHVKKYH). Residues 144–207 (VKKYHSNDNR…NGNGDSQPAE (64 aa)) form a disordered region. The segment covering 148–188 (HSNDNRDKDNTGLGDGDKDNTCKGDDDKEKSGSGGCEKENE) has biased composition (basic and acidic residues). Residue Lys-185 forms a Glycyl lysine isopeptide (Lys-Gly) (interchain with G-Cter in ubiquitin) linkage. The C2H2-type 5 zinc finger occupies 215-239 (VVCKEIGCGKAFKYPSQLQKHQDSH). Residues 247–272 (AFCSEPGCMKYFTNEECLKSHIRSCH) form a C2H2-type 6; degenerate zinc finger. A C2H2-type 7; degenerate zinc finger spans residues 275–296 (INCEICGSKHLKKNIKRHLRTH). Residues 305–330 (IKCEVEGCSSTFSKASNLQKHMKAVH) form a C2H2-type 8 zinc finger. The segment at 336 to 362 (FVCGFPGCGMRFAYKHVRNKHENSGYH) adopts a C2H2-type 9; degenerate zinc-finger fold. Positions 384 to 391 (LKRKQVTA) match the Nuclear localization signal motif.

In terms of processing, protein product TFIIIA (44 kDa) is proteolytically cleaved into TFIIIA-C (34 kDa). Expressed in seedlings, flowers, siliques and seeds.

Its subcellular location is the nucleus. It localises to the nucleolus. Essential protein. Isoform 1 is a transcription activator the binds both 5S rDNA and 5S rRNA and stimulates the transcription of 5S rRNA gene. Isoform 1 regulates 5S rRNA levels during development. This chain is Transcription factor IIIA, found in Arabidopsis thaliana (Mouse-ear cress).